The following is a 308-amino-acid chain: MAHMKTRLVYASILMMGALCLYFSMDSFRELPFVFKKSHGKFLQIPDIDCKQKPPFLVLLVTSSHKQLAARMAIRKTWGRETSVQGQQVRTFFLLGTSDSTEEMDATTLESEQHRDIIQKDFKDAYFNLTLKTMMGMEWVYHFCPQTAYVMKTDSDMFVNVGYLTELLLKKNKTTRFFTGYIKPHDFPIRQKFNKWFVSKFEYPWDRYPPFCSGTGYVFSSDVAIQVYNVSESVPFIKLEDVFVGLCLAKLKIRPEELHTKQTFFPGGLRFSVCRFQKIVACHFMKPQDLLTYWQALENSKEQDCPAV.

Topologically, residues 1–7 (MAHMKTR) are cytoplasmic. A helical; Signal-anchor for type II membrane protein transmembrane segment spans residues 8–25 (LVYASILMMGALCLYFSM). At 26-308 (DSFRELPFVF…NSKEQDCPAV (283 aa)) the chain is on the lumenal side. Residues Asn128, Asn172, and Asn229 are each glycosylated (N-linked (GlcNAc...) asparagine).

This sequence belongs to the glycosyltransferase 31 family. In terms of tissue distribution, expressed in brain and kidney.

The protein localises to the golgi apparatus membrane. It carries out the reaction a globoside Gb4Cer (d18:1(4E)) + UDP-alpha-D-galactose = a globoside GalGb4Cer (d18:1(4E)) + UDP + H(+). Its pathway is protein modification; protein glycosylation. In terms of biological role, catalyzes the transfer of Gal to GlcNAc-based acceptors with a preference for the core3 O-linked glycan GlcNAc(beta1,3)GalNAc structure. Can use glycolipid LC3Cer as an efficient acceptor. Also catalyzes the transfer of Gal to the terminal GalNAc unit of the globoside GB4, thereby synthesizing the glycolipid GB5, also known as the stage-specific embryonic antigen-3 (SSEA-3). This chain is Beta-1,3-galactosyltransferase 5, found in Mus musculus (Mouse).